A 209-amino-acid polypeptide reads, in one-letter code: Transcription elongation factor A protein-like 4 (209 aa).

Residue methionine 1 is modified to N-acetylmethionine. The disordered stretch occupies residues 1-125 (MEKLYNENEG…VPRKAKRKTN (125 aa)). Residues 25–96 (QDERKPEVAC…GSEREGKPES (72 aa)) are compositionally biased toward basic and acidic residues. Residues serine 88 and serine 96 each carry the phosphoserine modification.

Belongs to the TFS-II family. TFA subfamily.

Its subcellular location is the nucleus. Its function is as follows. May be involved in transcriptional regulation. This Pongo abelii (Sumatran orangutan) protein is Transcription elongation factor A protein-like 4 (TCEAL4).